The primary structure comprises 71 residues: Beta-defensin 2 (71 aa).

An N-terminal signal peptide occupies residues 1–20 (MRTLCSLLLICCLLFSYTTP). 3 disulfide bridges follow: cysteine 37-cysteine 66, cysteine 44-cysteine 59, and cysteine 49-cysteine 67.

Belongs to the beta-defensin family. As to expression, kidney, uterus and to a lesser extent in heart.

It is found in the secreted. Functionally, has bactericidal activity. In Mus musculus (Mouse), this protein is Beta-defensin 2 (Defb2).